The following is a 1262-amino-acid chain: MMSFVQKVSLFILAVFQPSVILAQQDALGGCTHLGQEYADRDVWKPEPCQICVCDSGSVLCDDIICDDQELDCPNPEIPLGECCPVCPQTTPQPTELPYTQGPKGDPGSPGSPGRTGAPGPPGQPGSPGAPGPPGICQSCPSISGGSFSPQYDSYDVKAGSVGMGYPPQPISGFPGPPGPSGPPGPPGHAGPPGSNGYQGPPGEPGQPGPSGPPGPAGMIGPAGPPGKDGEPGRPGRNGDRGIPGLPGHKGHPGMPGMPGMKGARGFDGKDGAKGDSGAPGPKGEAGQPGANGSPGQPGPGGPTGERGRPGNPGGPGAHGKDGAPGTAGPLGPPGPPGTAGFPGSPGFKGEAGPPGPAGASGNPGERGEPGPQGQAGPPGPQGPPGRAGSPGGKGEMGPSGIPGGPGPPGGRGLPGPPGTSGNPGAKGTPGEPGKNGAKGDPGPKGERGENGTPGARGPPGEEGKRGANGEPGQNGVPGTPGERGSPGFRGLPGSNGLPGEKGPAGERGSPGPPGPSGPAGDRGQDGGPGLPGMRGLPGIPGSPGSDGKPGPPGNQGEPGRSGPPGPAGPRGQPGVMGFPGPKGNEGAPGKNGERGPGGPPGTPGPAGKNGDVGLPGPPGPAGPAGDRGEPGPSGSPGLQGLPGGPGPAGENGKPGEPGPKGDIGGPGFPGPKGENGIPGERGPQGPPGPTGARGGPGPAGSEGAKGPPGPPGAPGGTGLPGLQGMPGERGASGSPGPKGDKGEPGGKGADGLPGARGERGNVGPIGPPGPAGPPGDKGETGPAGAPGPAGSRGGPGERGEQGLPGPAGFPGAPGQNGEPGGKGERGPPGLRGEAGPPGAAGPQGGPGAPGPPGPQGVKGERGSPGGPGAAGFPGARGPPGPPGNNGDRGESGPPGVPGPPGHPGPAGNNGAPGKAGERGFQGPLGPQGAIGSPGASGARGPPGPAGPPGKDGRGGYPGPIGPPGPRGNRGESGPAGPPGQPGLPGPSGPPGPCCGGGVASLGAGEKGPVGYGYEYRDEPKENEINLGEIMSSMKSINNQIENILSPDGSRKNPARNCRDLKFCHPELKSGEYWIDPNQGCKMDAIKVYCNMETGETCLSANPATVPRKNWWTTESSGKKHVWFGESMKGGFQFSYGDPDLPEDVSEVQLAFLRILSSRASQNITYHCKNSIAYMNQASGNVKKALKLMSSVETDIKAEGNSKYMYAVLEDGCTKHTGEWGKTVFEYRTRKTMRLPVVDIAPIDIGGPDQEFGVDVGPVCFL.

The N-terminal stretch at 1–23 (MMSFVQKVSLFILAVFQPSVILA) is a signal peptide. Residues 24-150 (QQDALGGCTH…PSISGGSFSP (127 aa)) constitute a propeptide, N-terminal propeptide. Residues 29 to 88 (GGCTHLGQEYADRDVWKPEPCQICVCDSGSVLCDDIICDDQELDCPNPEIPLGECCPVCP) enclose the VWFC domain. Disordered regions lie at residues 95–143 (TELP…CPSI) and 160–1000 (GSVG…GGVA). Low complexity predominate over residues 102–118 (GPKGDPGSPGSPGRTGA). Residues 119–134 (PGPPGQPGSPGAPGPP) show a composition bias toward pro residues. The nonhelical region (N-terminal) stretch occupies residues 145 to 164 (GGSFSPQYDSYDVKAGSVGM). A triple-helical region region spans residues 165–994 (GYPPQPISGF…PGPSGPPGPC (830 aa)). Pro residues predominate over residues 167–190 (PPQPISGFPGPPGPSGPPGPPGHA). The segment covering 192–201 (PPGSNGYQGP) has biased composition (low complexity). The span at 202–216 (PGEPGQPGPSGPPGP) shows a compositional bias: pro residues. Positions 228-240 (KDGEPGRPGRNGD) are enriched in basic and acidic residues. The segment covering 253–264 (PGMPGMPGMKGA) has biased composition (low complexity). Lys-262 bears the 5-hydroxylysine mark. Basic and acidic residues predominate over residues 265-274 (RGFDGKDGAK). 2 stretches are compositionally biased toward low complexity: residues 276–295 (DSGA…NGSP) and 339–376 (TAGF…QGQA). Lys-283 carries the post-translational modification 5-hydroxylysine. Over residues 389–414 (GSPGGKGEMGPSGIPGGPGPPGGRGL) the composition is skewed to gly residues. Low complexity-rich tracts occupy residues 534-549 (MRGL…SDGK) and 631-640 (PGPSGSPGLQ). Over residues 641-650 (GLPGGPGPAG) the composition is skewed to gly residues. Positions 672–684 (PKGENGIPGERGP) are enriched in low complexity. The segment covering 692–701 (GARGGPGPAG) has biased composition (gly residues). Low complexity-rich tracts occupy residues 723–738 (LQGM…SPGP), 781–790 (TGPAGAPGPA), 802–817 (QGLP…PGQN), and 828–838 (PPGLRGEAGPP). Residue Lys-859 is modified to 5-hydroxylysine. Residues 863–872 (GSPGGPGAAG) are compositionally biased toward gly residues. Pro residues predominate over residues 895–904 (PGVPGPPGHP). The span at 927 to 940 (PQGAIGSPGASGAR) shows a compositional bias: low complexity. A compositionally biased stretch (pro residues) spans 976 to 993 (AGPPGQPGLPGPSGPPGP). The segment at 995-1003 (CGGGVASLG) is nonhelical region (C-terminal). Residues 1018 to 1262 (DEPKENEINL…GVDVGPVCFL (245 aa)) constitute a propeptide, C-terminal propeptide. Positions 1028–1262 (GEIMSSMKSI…GVDVGPVCFL (235 aa)) constitute a Fibrillar collagen NC1 domain. 3 disulfide bridges follow: Cys-1058–Cys-1090, Cys-1098–Cys-1260, and Cys-1168–Cys-1213. Residues Asp-1076, Asn-1078, Gln-1079, Cys-1081, and Asp-1084 each coordinate Ca(2+). Asn-1163 is a glycosylation site (N-linked (GlcNAc...) asparagine).

The protein belongs to the fibrillar collagen family. As to quaternary structure, trimers of identical alpha 1(III) chains. The chains are linked to each other by interchain disulfide bonds. Trimers are also cross-linked via hydroxylysines. Post-translationally, prolines at the third position of the tripeptide repeating unit (G-X-Y) are hydroxylated in some or all of the chains.

The protein localises to the secreted. It localises to the extracellular space. It is found in the extracellular matrix. Functionally, collagen type III occurs in most soft connective tissues along with type I collagen. The chain is Collagen alpha-1(III) chain (COL3A1) from Gallus gallus (Chicken).